A 139-amino-acid chain; its full sequence is Peptide methionine sulfoxide reductase B5 (139 aa).

An N-acetylalanine modification is found at alanine 2. The MsrB domain occupies 12–133 (EEEWRAVLSP…NSVSISFNPA (122 aa)). Zn(2+) is bound by residues cysteine 51, cysteine 54, cysteine 97, and cysteine 100. Residues cysteine 69 and cysteine 122 are joined by a disulfide bond. Cysteine 122 serves as the catalytic Nucleophile.

This sequence belongs to the MsrB Met sulfoxide reductase family. Zn(2+) is required as a cofactor.

It is found in the cytoplasm. Its subcellular location is the cytosol. It catalyses the reaction L-methionyl-[protein] + [thioredoxin]-disulfide + H2O = L-methionyl-(R)-S-oxide-[protein] + [thioredoxin]-dithiol. In terms of biological role, catalyzes the reduction of methionine sulfoxide (MetSO) to methionine in proteins. Plays a protective role against oxidative stress by restoring activity to proteins that have been inactivated by methionine oxidation. MSRB family specifically reduces the MetSO R-enantiomer. The chain is Peptide methionine sulfoxide reductase B5 (MSRB5) from Arabidopsis thaliana (Mouse-ear cress).